A 435-amino-acid chain; its full sequence is MKGVGKPYENSHTSFLLVFFVLTLFSPAFSINTLSSIESLKISNSRTLVSPGNVLELGFFRTPSSSRWYLGMWYKKLSERTYVWVANRDNPLSCSIGTLKISNMNLVLLDHSNKSLWSTNHTRGNERSPVVAELLANGNFVLRDSNKNDRSGFLWQSFDYPTDTLLPEMKLGYDLRTGLNRFLTSWRSSDDPSSGDFSYKLQTRRLPEFYLFKDDFLVHRSGPWNGVGFSGMPEDQKLSYMVYNFTQNSEEVAYTFLMTNNSIYSRLTISSSGYFERLTWTPSSGMWNVFWSSPEDFQCDVYKICGAYSYCDVNTSPVCNCIQRFDPSNVQEWGLRAWSGGCRRRTRLSCSGDGFTRMKKMKLPETTMAIVDRSIGLKECEKRCLSDCNCTAFANADIRNGGTGCVIWTGQLEDIRTYFANGQDLYVRLAPADLV.

The first 30 residues, 1-30 (MKGVGKPYENSHTSFLLVFFVLTLFSPAFS), serve as a signal peptide directing secretion. The region spanning 33–155 (TLSSIESLKI…NKNDRSGFLW (123 aa)) is the Bulb-type lectin domain. N-linked (GlcNAc...) asparagine glycosylation is found at N113, N120, N244, N260, and N389. In terms of domain architecture, PAN spans 350-430 (CSGDGFTRMK…NGQDLYVRLA (81 aa)). Disulfide bonds link C380–C405 and C388–C390.

In terms of tissue distribution, stigma.

In terms of biological role, involved in sporophytic self-incompatibility system (the inability of flowering plants to achieve self-fertilization). This is S-locus-specific glycoprotein BS29-2 (SLSG) from Brassica oleracea var. alboglabra (Chinese kale).